The following is a 483-amino-acid chain: Aspartyl/glutamyl-tRNA(Asn/Gln) amidotransferase subunit B (483 aa).

This sequence belongs to the GatB/GatE family. GatB subfamily. Heterotrimer of A, B and C subunits.

It catalyses the reaction L-glutamyl-tRNA(Gln) + L-glutamine + ATP + H2O = L-glutaminyl-tRNA(Gln) + L-glutamate + ADP + phosphate + H(+). The catalysed reaction is L-aspartyl-tRNA(Asn) + L-glutamine + ATP + H2O = L-asparaginyl-tRNA(Asn) + L-glutamate + ADP + phosphate + 2 H(+). In terms of biological role, allows the formation of correctly charged Asn-tRNA(Asn) or Gln-tRNA(Gln) through the transamidation of misacylated Asp-tRNA(Asn) or Glu-tRNA(Gln) in organisms which lack either or both of asparaginyl-tRNA or glutaminyl-tRNA synthetases. The reaction takes place in the presence of glutamine and ATP through an activated phospho-Asp-tRNA(Asn) or phospho-Glu-tRNA(Gln). This is Aspartyl/glutamyl-tRNA(Asn/Gln) amidotransferase subunit B from Rickettsia africae (strain ESF-5).